We begin with the raw amino-acid sequence, 931 residues long: Bifunctional glutamine synthetase adenylyltransferase/adenylyl-removing enzyme (931 aa).

Residues 1-434 (MTLAPADLPA…STEFAALLAP (434 aa)) form an adenylyl removase region. The segment at 441–931 (PDALANYWRS…ACIAAELPFA (491 aa)) is adenylyl transferase.

This sequence belongs to the GlnE family. Mg(2+) is required as a cofactor.

It carries out the reaction [glutamine synthetase]-O(4)-(5'-adenylyl)-L-tyrosine + phosphate = [glutamine synthetase]-L-tyrosine + ADP. The enzyme catalyses [glutamine synthetase]-L-tyrosine + ATP = [glutamine synthetase]-O(4)-(5'-adenylyl)-L-tyrosine + diphosphate. Its function is as follows. Involved in the regulation of glutamine synthetase GlnA, a key enzyme in the process to assimilate ammonia. When cellular nitrogen levels are high, the C-terminal adenylyl transferase (AT) inactivates GlnA by covalent transfer of an adenylyl group from ATP to specific tyrosine residue of GlnA, thus reducing its activity. Conversely, when nitrogen levels are low, the N-terminal adenylyl removase (AR) activates GlnA by removing the adenylyl group by phosphorolysis, increasing its activity. The regulatory region of GlnE binds the signal transduction protein PII (GlnB) which indicates the nitrogen status of the cell. This chain is Bifunctional glutamine synthetase adenylyltransferase/adenylyl-removing enzyme, found in Stenotrophomonas maltophilia (strain R551-3).